The following is a 695-amino-acid chain: Glycine--tRNA ligase beta subunit (695 aa).

The protein belongs to the class-II aminoacyl-tRNA synthetase family. In terms of assembly, tetramer of two alpha and two beta subunits.

The protein resides in the cytoplasm. It catalyses the reaction tRNA(Gly) + glycine + ATP = glycyl-tRNA(Gly) + AMP + diphosphate. This Lawsonia intracellularis (strain PHE/MN1-00) protein is Glycine--tRNA ligase beta subunit.